Reading from the N-terminus, the 93-residue chain is UPF0147 protein PF0239 (93 aa).

It belongs to the UPF0147 family.

The polypeptide is UPF0147 protein PF0239 (Pyrococcus furiosus (strain ATCC 43587 / DSM 3638 / JCM 8422 / Vc1)).